Here is a 324-residue protein sequence, read N- to C-terminus: Glycerol-3-phosphate dehydrogenase [NAD(P)+] (324 aa).

The NADPH site is built by tryptophan 15, arginine 35, and lysine 101. 2 residues coordinate sn-glycerol 3-phosphate: lysine 101 and glycine 129. Alanine 133 serves as a coordination point for NADPH. Sn-glycerol 3-phosphate is bound by residues lysine 184, aspartate 237, serine 247, arginine 248, and asparagine 249. Catalysis depends on lysine 184, which acts as the Proton acceptor. Position 248 (arginine 248) interacts with NADPH. Residues valine 272 and glutamate 274 each contribute to the NADPH site.

Belongs to the NAD-dependent glycerol-3-phosphate dehydrogenase family.

The protein localises to the cytoplasm. It catalyses the reaction sn-glycerol 3-phosphate + NAD(+) = dihydroxyacetone phosphate + NADH + H(+). The catalysed reaction is sn-glycerol 3-phosphate + NADP(+) = dihydroxyacetone phosphate + NADPH + H(+). The protein operates within membrane lipid metabolism; glycerophospholipid metabolism. In terms of biological role, catalyzes the reduction of the glycolytic intermediate dihydroxyacetone phosphate (DHAP) to sn-glycerol 3-phosphate (G3P), the key precursor for phospholipid synthesis. The polypeptide is Glycerol-3-phosphate dehydrogenase [NAD(P)+] (Gluconobacter oxydans (strain 621H) (Gluconobacter suboxydans)).